A 223-amino-acid chain; its full sequence is UPF0441 protein YgiB (223 aa).

Low complexity predominate over residues 178 to 195; it reads TVPKTAMAPKPATTTTVT. The tract at residues 178 to 223 is disordered; sequence TVPKTAMAPKPATTTTVTRGGFGESVAKQSTMQRSATGTSSRSMGG. Polar residues predominate over residues 204–223; sequence AKQSTMQRSATGTSSRSMGG.

Belongs to the UPF0441 family.

The polypeptide is UPF0441 protein YgiB (Shigella dysenteriae serotype 1 (strain Sd197)).